We begin with the raw amino-acid sequence, 364 residues long: Triacylglycerol lipase (364 aa).

The signal sequence occupies residues 1–44; sequence MARTMRSRVVAGAVACAMSIAPFAGTTAVMTLATTHAAMAATAP. Positions 54–333 constitute an AB hydrolase-1 domain; it reads PIILVHGLSG…TSYKWNHLDE (280 aa). Position 61 (Leu-61) interacts with substrate. Catalysis depends on Ser-131, which acts as the Nucleophile. A substrate-binding site is contributed by Gln-132. A disulfide bond links Cys-234 and Cys-314. Asp-286 contributes to the Ca(2+) binding site. Active-site charge relay system residues include Asp-308 and His-330. Residues Asp-332, Gln-336, and Val-340 each coordinate Ca(2+).

It belongs to the AB hydrolase superfamily. Pseudomonas lipase family. In terms of assembly, monomer. The cofactor is Ca(2+).

The protein localises to the secreted. The catalysed reaction is a triacylglycerol + H2O = a diacylglycerol + a fatty acid + H(+). Its function is as follows. Catalyzes the hydrolysis of triacylglycerol. The chain is Triacylglycerol lipase from Pseudomonas sp. (strain KWI-56).